The following is a 205-amino-acid chain: Myb-related protein 305 (205 aa).

2 consecutive HTH myb-type domains span residues 10–62 and 63–117; these read DVEV…LNYL and RPDV…QKHM. 2 DNA-binding regions (H-T-H motif) span residues 38-62 and 90-113; these read WNSL…LNYL and WSKI…RTRI.

Expressed only in flowers.

The protein resides in the nucleus. Transcription factor. In Antirrhinum majus (Garden snapdragon), this protein is Myb-related protein 305.